Here is a 218-residue protein sequence, read N- to C-terminus: Adenylate kinase (218 aa).

10–15 is an ATP binding site; the sequence is GAGKGT. The interval 30 to 59 is NMP; that stretch reads STGDMLRAAVKAGTPLGIEAKKVMDAGGLV. Residues Thr31, Arg36, 57-59, 85-88, and Gln92 each bind AMP; these read GLV and GFPR. An LID region spans residues 122–159; sequence GRRSHAASGRTYHVKFNPPKVAGVDDVTGEPLIQRDDD. Residues Arg123 and 132–133 each bind ATP; that span reads TY. Residues Arg156 and Arg167 each coordinate AMP. Gly203 is a binding site for ATP.

This sequence belongs to the adenylate kinase family. Monomer.

It localises to the cytoplasm. The enzyme catalyses AMP + ATP = 2 ADP. The protein operates within purine metabolism; AMP biosynthesis via salvage pathway; AMP from ADP: step 1/1. Catalyzes the reversible transfer of the terminal phosphate group between ATP and AMP. Plays an important role in cellular energy homeostasis and in adenine nucleotide metabolism. This chain is Adenylate kinase, found in Albidiferax ferrireducens (strain ATCC BAA-621 / DSM 15236 / T118) (Rhodoferax ferrireducens).